The sequence spans 513 residues: Probable cytosol aminopeptidase (513 aa).

Mn(2+) contacts are provided by Lys277 and Asp282. Residue Lys289 is part of the active site. Residues Asp300, Asp359, and Glu361 each coordinate Mn(2+). The active site involves Arg363.

This sequence belongs to the peptidase M17 family. It depends on Mn(2+) as a cofactor.

The protein resides in the cytoplasm. The enzyme catalyses Release of an N-terminal amino acid, Xaa-|-Yaa-, in which Xaa is preferably Leu, but may be other amino acids including Pro although not Arg or Lys, and Yaa may be Pro. Amino acid amides and methyl esters are also readily hydrolyzed, but rates on arylamides are exceedingly low.. The catalysed reaction is Release of an N-terminal amino acid, preferentially leucine, but not glutamic or aspartic acids.. Functionally, presumably involved in the processing and regular turnover of intracellular proteins. Catalyzes the removal of unsubstituted N-terminal amino acids from various peptides. This Mycobacterium sp. (strain KMS) protein is Probable cytosol aminopeptidase.